The primary structure comprises 429 residues: Glutamate-1-semialdehyde 2,1-aminomutase (429 aa).

Residue Lys-265 is modified to N6-(pyridoxal phosphate)lysine.

It belongs to the class-III pyridoxal-phosphate-dependent aminotransferase family. HemL subfamily. Homodimer. Pyridoxal 5'-phosphate is required as a cofactor.

Its subcellular location is the cytoplasm. It carries out the reaction (S)-4-amino-5-oxopentanoate = 5-aminolevulinate. It participates in porphyrin-containing compound metabolism; protoporphyrin-IX biosynthesis; 5-aminolevulinate from L-glutamyl-tRNA(Glu): step 2/2. This Legionella pneumophila (strain Lens) protein is Glutamate-1-semialdehyde 2,1-aminomutase.